Here is a 912-residue protein sequence, read N- to C-terminus: Microtubule-associated protein 10 (912 aa).

Disordered stretches follow at residues 31-50 (VAEE…RPSR), 209-239 (KSVE…ADKP), 254-296 (GRAF…QEGT), 335-366 (ASEE…SATG), 443-469 (SPES…NEKS), and 730-859 (RACD…VSSY). The span at 211–229 (VEVSPQTWQENQQLQQPDS) shows a compositional bias: polar residues. Basic and acidic residues predominate over residues 254 to 263 (GRAFHSKADS). Residues 266–295 (TDSMENGKTNSDMCSKGSSERSVSPPNQEG) are compositionally biased toward polar residues. Residues 347–362 (ENVNPPTHTNPPEHTN) are compositionally biased toward low complexity. Residues 452-468 (CKSESKKDKLSVGENEK) show a composition bias toward basic and acidic residues. The segment covering 735 to 768 (SPGTENPKNSQHTSTSSETRLSIRKNSSAKSSIL) has biased composition (polar residues). The span at 796–807 (EASSSDFSSSQW) shows a compositional bias: low complexity. Polar residues predominate over residues 841–859 (GCKSSEKSQSPRTSQVSSY).

As to quaternary structure, interacts (via middle region) with microtubules.

The protein resides in the cytoplasm. It localises to the cytoskeleton. It is found in the spindle pole. The protein localises to the microtubule organizing center. Its subcellular location is the centrosome. The protein resides in the midbody. Its function is as follows. Microtubule-associated protein (MAP) that plays a role in the regulation of cell division; promotes microtubule stability and participates in the organization of the spindle midzone and normal progress of cytokinesis. In Bos taurus (Bovine), this protein is Microtubule-associated protein 10 (MAP10).